The sequence spans 395 residues: S-adenosylmethionine synthase (395 aa).

Histidine 14 serves as a coordination point for ATP. Aspartate 16 serves as a coordination point for Mg(2+). A K(+)-binding site is contributed by glutamate 42. Residues glutamate 55 and glutamine 98 each coordinate L-methionine. The tract at residues 98 to 108 (QSPDIAMGVDK) is flexible loop. ATP is bound by residues 175-177 (DGK), 242-243 (RF), aspartate 251, 257-258 (RK), alanine 274, and lysine 278. Aspartate 251 contacts L-methionine. Lysine 282 lines the L-methionine pocket.

It belongs to the AdoMet synthase family. Homotetramer; dimer of dimers. Requires Mg(2+) as cofactor. It depends on K(+) as a cofactor.

Its subcellular location is the cytoplasm. The enzyme catalyses L-methionine + ATP + H2O = S-adenosyl-L-methionine + phosphate + diphosphate. Its pathway is amino-acid biosynthesis; S-adenosyl-L-methionine biosynthesis; S-adenosyl-L-methionine from L-methionine: step 1/1. Its function is as follows. Catalyzes the formation of S-adenosylmethionine (AdoMet) from methionine and ATP. The overall synthetic reaction is composed of two sequential steps, AdoMet formation and the subsequent tripolyphosphate hydrolysis which occurs prior to release of AdoMet from the enzyme. In Thermosipho melanesiensis (strain DSM 12029 / CIP 104789 / BI429), this protein is S-adenosylmethionine synthase.